Consider the following 1130-residue polypeptide: BTB/POZ domain-containing protein 7 (1130 aa).

Over residues 1–10 the composition is skewed to polar residues; sequence MGANASNYPH. A disordered region spans residues 1–24; sequence MGANASNYPHSCSPRVGGNSQAQQ. The N-myristoyl glycine moiety is linked to residue G2. BTB domains follow at residues 142–211 and 247–341; these read TDVD…GMED and YDVV…DLSV. A BACK domain is found at 413-479; the sequence is YGSKWVHRQA…WGEHQLMKRI (67 aa). Phosphoserine is present on S722. 2 disordered regions span residues 898–1050 and 1062–1130; these read SEAG…PAHV and FGLT…KSAL. Composition is skewed to basic and acidic residues over residues 923–935 and 996–1005; these read PTLE…RENQ and KKQEDPRREY. S1008 bears the Phosphoserine mark. Polar residues predominate over residues 1063 to 1075; that stretch reads GLTSNRPPSHSAC. Composition is skewed to basic and acidic residues over residues 1080–1090 and 1101–1112; these read LEERSSRRLTD and RNADLERGDSIS.

As to expression, specifically expressed in embryonic epithelia.

It is found in the nucleus. Acts as a mediator of epithelial dynamics and organ branching by promoting cleft progression. Induced following accumulation of fibronectin in forming clefts, leading to local expression of the cell-scattering SNAIL2 and suppression of E-cadherin levels, thereby altering cell morphology and reducing cell-cell adhesion. This stimulates cell separation at the base of forming clefts by local, dynamic intercellular gap formation and promotes cleft progression. The sequence is that of BTB/POZ domain-containing protein 7 (Btbd7) from Mus musculus (Mouse).